We begin with the raw amino-acid sequence, 198 residues long: Beta-crystallin A1-1 (198 aa).

An N-terminal arm region spans residues 1-13; sequence MAQINPLPVPLGP. Beta/gamma crystallin 'Greek key' domains lie at 14-53 and 54-100; these read WKIT…KVEC and GAWI…RPIC. The connecting peptide stretch occupies residues 101–106; it reads SANHKE. Beta/gamma crystallin 'Greek key' domains are found at residues 107-148 and 149-197; these read SKLV…KVQC and GAWV…RRIQ.

The protein belongs to the beta/gamma-crystallin family. Homo/heterodimer, or complexes of higher-order. The structure of beta-crystallin oligomers seems to be stabilized through interactions between the N-terminal arms. In terms of processing, the N-terminus is blocked.

Crystallins are the dominant structural components of the vertebrate eye lens. The polypeptide is Beta-crystallin A1-1 (Aquarana catesbeiana (American bullfrog)).